We begin with the raw amino-acid sequence, 397 residues long: MDSLATSINQFALELSKKLAESAQGKNIFFSSWSISTSLTIVYLGAKGTTAAQMAQVLQFNRDQGVKCDPESEKKRKMEFNLSNSEEIHSDFQTLISEILKPNDDYLLKTANAIYGEKTYAFHNKYLEDMKTYFGAEPQPVNFVEASDQIRKDINSWVERQTEGKIQNLLPDDSVDSTTRMILVNALYFKGIWEHQFLVQNTTEKPFRINETTSKPVQMMFMKKKLHIFHIEKPKAVGLQLYYKSRDLSLLILLPEDINGLEQLEKAITYEKLNEWTSADMMELYEVQLHLPKFKLEDSYDLKSTLSSMGMSDAFSQSKADFSGMSSARNLFLSNVFHKAFVEINEQGTEAAAGSGSEIDIRIRVPSIEFNANHPFLFFIRHNKTNTILFYGRLCSP.

Cys68 and Cys395 form a disulfide bridge. A Nuclear localization signal motif is present at residues 74-77; the sequence is KKRK.

This sequence belongs to the serpin family. Ov-serpin subfamily. Expressed specifically in myeloid cells and the bone marrow.

The protein resides in the nucleus. It is found in the cytoplasm. Protease inhibitor that may play a role in the regulation of protease activities during hematopoiesis and apoptosis induced by TNF. May regulate protease activities in the cytoplasm and in the nucleus. This is Serpin B10 (SERPINB10) from Homo sapiens (Human).